A 141-amino-acid polypeptide reads, in one-letter code: MVHSQLPVAAPLRLLCALLLLPLATMIPGGLSPRSVTDPDVQEAAEFAVQEYNALSANAYYYKQLRIVEAQSQVVTGAKYYLTMELMKTKCAKTTGKPKVYKEIQNCELPPKAQQEKLTCRFQVWSCPWLQKIELTKMSCN.

A signal peptide spans 1–26 (MVHSQLPVAAPLRLLCALLLLPLATM). The Cystatin domain maps to 29–129 (GGLSPRSVTD…CRFQVWSCPW (101 aa)). The Secondary area of contact motif lies at 73–77 (QVVTG). Cystine bridges form between Cys91–Cys107 and Cys120–Cys140.

Belongs to the cystatin family. In terms of tissue distribution, expressed at a low level by the venom gland (at protein level).

The protein resides in the secreted. Functionally, recombinant AsCystatin inhibits various C1 cysteine proteases including cathepsin L (Ki is 0.89 pM), papain (Ki is 1.74 pM) and cathepsin B (Ki is 0.69 nM). This activity has also been observed in the crude venom. This protein has no toxic activity and its function in the venom is unknown. It may play a role as a housekeeping or regulatory protein. The polypeptide is AsCystatin (Austrelaps superbus (Lowland copperhead snake)).